An 853-amino-acid polypeptide reads, in one-letter code: Leucine-rich repeat and death domain-containing protein 1 (853 aa).

The interval 1 to 78 (MSEDGSNVEP…EEKNTGIPFS (78 aa)) is disordered. Residues 19-31 (LEEPGSEISDLLD) show a composition bias toward acidic residues. The span at 56–65 (QSAASFTSQL) shows a compositional bias: polar residues. 26 LRR repeats span residues 133-157 (MKSDNFTVNLDAKGLQEFPVDIVKV), 159-180 (YVKYLYLDKNQIKNFQGIDPGD), 183-204 (GLEILSLQENGLSSIPLEIQLF), 206-227 (NLKILNASYNEISQIPKELLQL), 229-251 (NMRQLLLNSNHIDTLPSGLEHLR), 252-274 (YLETLSLGKNMLTYIPDSLSSLK), 275-297 (NLRILNLEYNQLTIFSKSLCFLP), 298-319 (KLNSLNLTGNMIGSLPKEVREL), 321-342 (NLESLLMDHNKLTFLAVEIFQL), 344-365 (KIKELHLADNKLEAISPKIENF), 367-388 (ELRLLNLDKNLLQSIPKKISHC), 390-411 (NLESLSLSDNNIEELPKKIRKL), 413-435 (NLRQLHVNRNKMITMTEEISHLS), 436-457 (NIHILEFSGNQITHVPIEIKNC), 459-481 (KITRVELNYNNIMYFPVGLCALQ), 482-503 (SLDYLSFNGNYISEIPVDMSFS), 505-527 (QLLHLELNRNKLTVFSKHLCSLT), 528-549 (NLEYLDLAKNQIMTIPSCISAM), 551-573 (SLHVLILSDNKFESFPKELCSLK), 574-596 (NLRVLDISENKLQKIPLEISKLK), 597-618 (RIQKLNLSNNIFTNFPVELCQL), 620-641 (TLEELNISQTSGKKLTRLPEEV), 646-668 (QLKILNISNNAIKDIPKNIGELR), 669-690 (SLVSFYASNNQISSLPSSFLSL), 692-713 (VLQSLDLRGNNMTALPSGIYKL), and 715-736 (SLKEINFDDNPLMRPPMEICKG). In terms of domain architecture, Death spans 757-845 (LEKIFNIVAN…DIMDKITALN (89 aa)).

The protein is Leucine-rich repeat and death domain-containing protein 1 (Lrrd1) of Mus musculus (Mouse).